A 207-amino-acid chain; its full sequence is Intraflagellar transport protein 43 homolog A (207 aa).

The segment at 1-104 is disordered; the sequence is MDDNLQLGDS…GSDDEGDIPV (104 aa).

It belongs to the IFT43 family. As to quaternary structure, component of IFT complex A.

Its function is as follows. Component of IFT complex A (IFT-A) involved in retrograde ciliary transport along microtubules from the ciliary tip to the base. This is Intraflagellar transport protein 43 homolog A (ift43a) from Salmo salar (Atlantic salmon).